Reading from the N-terminus, the 344-residue chain is uncharacterized protein (344 aa).

One can recognise an HTH araC/xylS-type domain in the interval arginine 242–arginine 343. 2 DNA-binding regions (H-T-H motif) span residues threonine 263–glycine 284 and valine 310–tyrosine 333.

This is an uncharacterized protein from Mycobacterium bovis (strain ATCC BAA-935 / AF2122/97).